Here is a 255-residue protein sequence, read N- to C-terminus: NAD kinase (255 aa).

Asp44 functions as the Proton acceptor in the catalytic mechanism. NAD(+) is bound by residues Asp44–Gly45, His49, Asn114–Glu115, Asp144, Ala152, Ser155–Ser160, and Gln216.

It belongs to the NAD kinase family. A divalent metal cation is required as a cofactor.

It is found in the cytoplasm. The enzyme catalyses NAD(+) + ATP = ADP + NADP(+) + H(+). Functionally, involved in the regulation of the intracellular balance of NAD and NADP, and is a key enzyme in the biosynthesis of NADP. Catalyzes specifically the phosphorylation on 2'-hydroxyl of the adenosine moiety of NAD to yield NADP. The polypeptide is NAD kinase (Rickettsia typhi (strain ATCC VR-144 / Wilmington)).